The following is a 2114-amino-acid chain: MTSEMDDPEKAAVTITRLIEQLHAKKSSAQEKELSTARLLGLAKGKKECRKIISQNVNAMPAFISLLRSGTLLAKLNSASVLTVLCKDKNVRSKILIGGCIPPLLSLLKSDSVDAKRVVAEAIYEVSLCGMDGDNVGTKIFVTEGVVPSLWDQLKTGKKQDKTVEGHLVGALRNLCGDKDGFWALTLEDGGVDIILKLLQSSNPVSQSNAASLLARLIRIFTSSISKVEESGAVQVLVQLLGEENSVFVRASVVNALEAITSKSEEAITVARDLDGIHLLISAVVASSKESVEEETERVLQSYGTQALANLCGGMSGLIVYLGGLSLSPRLTEPIADILGALAYALRKFQLSCGDTREAFDPTLTEGILVKLLKPRDTQLIHERILEAMESLFGNVDLSKLLNNVDAKRVLVCLTILATDGPRERMITCLSNLCKHGDVWDAIGKREGIQILIPYLGLSSEQHQELSVEFLAILTDNVEESRWAVTSAGGIPPLLQILETGVSQKAKDDAVRVILNLCCHSEEIRLCVEKAGAIPALLGLLKNGGPKSQESSANTLLKLIKTADPSVIEQVQALFLGDAPKSKTHLIRVLGHVLASASLEEFVTKGSAANNGLRSLVQRLASSNEKMKENAASVLADLFSSRKDLCGGLGFDEDDNPCTKLLSGNTHAVATQLAHALGSLSNPTKKKTATKKLSGPEVEVIKPLIKSAKTNPIESTENPMSTLANLLSDPNVAAEALNDDVVSALTRVLREGTLQGKRNASHALHQLLKHFQVSDVFKGNEQCRFAVSELIDLLNATDLNNSAFIDVLEVLSLLAKAKYGANLSHNPFSAFGEVPSNLDSLVRGLAEGHPLVQDKAIEILSRFCKTQFILLGRLLVTQSKSISSLANRTINSSSPEIKVGGAILLVCAAKNDITLWAEAVEQSGYLKTLVNTLLDMSKQNSKSASYGIEIQRPRSFITSNLCLRMDDSEMVDPVTILGSTASMWLLSIICSSHPSNRLVVMEGNGLEIIAENLQRNKSNTQENSSDSEEKWIAMSFLAVMSQEPKVVSSPATENILQTLAPFMQSEQMIDGYFTAQVLAALVRHKNDKTISEIMNSDIVETTINLVGCEESDTRSLCALAEELSLVQNPYEATLEVLFENERVRSGSFTKKCIPLLVNLLKPYADKVGGIPVAIRLLRRIADNDDLSKLLIAEAGALDALAKYLSLSPQDSTEITVSELLESLFRSPEITRHKTAISSMKQLIGILHLASRSTRYNAARVLCELFSSEHIRDSELAWKALSPLIEMLNTTLESERVAALTALVKLTMGINPRPDILTSLEGNPLDNIYKILSLDSSSLESKTSAARICRFLFTNEGLRTSTSAACCIVSLISLIRTGKSTAIEAGMFALDRLLDIKRFVEVAEEHDCVNLFYGYVASENYLISEAAISCLTKMAKDNTPRKMDLIKMGIIEKCISQLSKSPPSSLCSVIADLFRVLTNVGVIARSQDAIKMVQPLLLILLRQDLDFQGQLGGLQAIANILEKPMVLESLKIASSTIIMPLIPLLESESIAVKNATTILLTSLLEMQRFQEEITTKNLIAPLVKLVGIRVRNLQEIALMGLERSSVTWPKEVADTGGIQELSKVIIDEDPQLPVYLWESAAFILCNILRINPEHYYFTVTIPVLSKMLFSTAESTVILAIDALIIRENQDSSSVQEMAESSALDALLDLLRSHHCEELSARLLELILRNPKVRETKICQFVLTPLSEYILDPDTISESAKILIAMALGDISQHEGLAKATDSPVACRALISLLEDEPSEEMQMVVMRALENFAMHSRTSRKAMAEAGGVYWVQEMLRSSNPQVSTQAALIIKSLFSNHTLQEYVSGEIIKSLTNAMEREFWTTTAINVEIVRTLNTILTTFPKLRSSEAATACIPHLIGALKSGEQEARDSAMDTIYTLRQSWTTMPTETARSQAVLAADAIPVLQLMMKSKLKSPAPSSFHERGNSLLNCLPGSLTVAIKRGDNLKRSNAFCRLIIDNCPTKKTKVVKRSSSPVWKESFTWDFAAPPRGQFLEIVCKSNNIFRNKNLGKVRIPIDKVLSEGSYSGIFKLNDESKKDNSSDRSLEIEIVWSNQSF.

42 ARM repeats span residues 2–42 (TSEM…LLGL), 46–87 (KKEC…VLCK), 89–128 (KNVR…EVSL), 135–177 (NVGT…NLCG), 180–219 (DGFW…RLIR), 222–262 (TSSI…AITS), 265–305 (EEAI…SYGT), 354–394 (GDTR…SLFG), 396–435 (VDLS…NLCK), 479–519 (EESR…NLCC), 522–561 (EEIR…KLIK), 563–595 (ADPS…HVLA), 601–640 (EFVT…DLFS), 643–682 (KDLC…SLSN), 708–750 (AKTN…RVLR), 774–816 (SDVF…LLAK), 825–865 (HNPF…RFCK), 870–910 (LLGR…CAAK), 914–953 (TLWA…IQRP), 994–1033 (PSNR…KWIA), 1044–1083 (PKVV…ALVR), 1087–1128 (DKTI…LVQN), 1141–1182 (ERVR…RIAD), 1185–1225 (DLSK…SLFR), 1227–1264 (PEIT…LCEL), 1265–1304 (FSSE…ALVK), 1312–1353 (RPDI…FLFT), 1355–1394 (EGLR…RLLD), 1396–1435 (KRFV…KMAK), 1454–1494 (ISQL…MVQP), 1496–1525 (LLIL…KPMV), 1526–1564 (LESL…SLLE), 1566–1605 (QRFQ…RSSV), 1606–1648 (TWPK…NILR), 1650–1689 (NPEH…ENQD), 1690–1730 (SSSV…RNPK), 1732–1771 (RETK…DISQ), 1772–1813 (HEGL…NFAM), 1816–1855 (RTSR…SLFS), 1857–1898 (HTLQ…TILT), 1901–1940 (PKLR…TLRQ), and 1949–1993 (TARS…CLPG). In terms of domain architecture, C2 spans 1974 to 2087 (SPAPSSFHER…LSEGSYSGIF (114 aa)).

As to quaternary structure, associates with cellulase synthase (CESA) complexes. Binds to cortical microtubules.

It is found in the cell membrane. The protein localises to the cytoplasm. The protein resides in the cytoskeleton. Functionally, regulator of the microtubular cytoskeleton. Microtubule-associated protein involved in the association of cellulase synthase (CESA) complexes (CSCs) and cortical microtubules. Promotes dynamics of CSCs in the plasma membrane. Regulates primary cell wall biosynthesis and cellulose microfibrils organization. This is Protein CELLULOSE SYNTHASE INTERACTIVE 2 from Arabidopsis thaliana (Mouse-ear cress).